A 147-amino-acid polypeptide reads, in one-letter code: Hemoglobin subunit epsilon (147 aa).

In terms of domain architecture, Globin spans 3 to 147 (HFTAEEKAAI…VAIALGHKYH (145 aa)). Phosphoserine is present on residues serine 14 and serine 51. Residues histidine 64 and histidine 93 each contribute to the heme b site.

Belongs to the globin family. Heterotetramer of two alpha chains and two epsilon chains in early embryonic hemoglobin Gower-2; two zeta chains and two epsilon chains in early embryonic hemoglobin Gower-1. Red blood cells.

Functionally, the epsilon chain is a beta-type chain of early mammalian embryonic hemoglobin. In Callithrix jacchus (White-tufted-ear marmoset), this protein is Hemoglobin subunit epsilon (HBE1).